Consider the following 285-residue polypeptide: Bifunctional protein FolD (285 aa).

NADP(+)-binding positions include 165-167, Thr-192, and Val-233; that span reads GRG.

The protein belongs to the tetrahydrofolate dehydrogenase/cyclohydrolase family. In terms of assembly, homodimer.

The catalysed reaction is (6R)-5,10-methylene-5,6,7,8-tetrahydrofolate + NADP(+) = (6R)-5,10-methenyltetrahydrofolate + NADPH. It carries out the reaction (6R)-5,10-methenyltetrahydrofolate + H2O = (6R)-10-formyltetrahydrofolate + H(+). The protein operates within one-carbon metabolism; tetrahydrofolate interconversion. Catalyzes the oxidation of 5,10-methylenetetrahydrofolate to 5,10-methenyltetrahydrofolate and then the hydrolysis of 5,10-methenyltetrahydrofolate to 10-formyltetrahydrofolate. The polypeptide is Bifunctional protein FolD (Mycobacterium sp. (strain MCS)).